We begin with the raw amino-acid sequence, 279 residues long: Ribosomal RNA small subunit methyltransferase A (279 aa).

Positions 10, 12, 37, 58, 83, and 108 each coordinate S-adenosyl-L-methionine.

The protein belongs to the class I-like SAM-binding methyltransferase superfamily. rRNA adenine N(6)-methyltransferase family. RsmA subfamily.

It is found in the cytoplasm. It catalyses the reaction adenosine(1518)/adenosine(1519) in 16S rRNA + 4 S-adenosyl-L-methionine = N(6)-dimethyladenosine(1518)/N(6)-dimethyladenosine(1519) in 16S rRNA + 4 S-adenosyl-L-homocysteine + 4 H(+). Functionally, specifically dimethylates two adjacent adenosines (A1518 and A1519) in the loop of a conserved hairpin near the 3'-end of 16S rRNA in the 30S particle. May play a critical role in biogenesis of 30S subunits. This chain is Ribosomal RNA small subunit methyltransferase A, found in Synechococcus elongatus (strain ATCC 33912 / PCC 7942 / FACHB-805) (Anacystis nidulans R2).